The following is a 394-amino-acid chain: Outer membrane protein S1 (394 aa).

Positions 1-21 (MNRKVLALLVPALLVAGAANA) are cleaved as a signal peptide. A disordered region spans residues 222–242 (SSSDRSDNQVARGYGDGMNER).

Belongs to the Gram-negative porin family. In terms of assembly, homotrimer.

The protein resides in the cell outer membrane. Forms pores that allow passive diffusion of small molecules across the outer membrane. This is Outer membrane protein S1 (ompS1) from Salmonella typhi.